The sequence spans 400 residues: Bifunctional enzyme IspD/IspF (400 aa).

Residues 1 to 235 (MSLWTVLLAA…LAEAAAPPVP (235 aa)) are 2-C-methyl-D-erythritol 4-phosphate cytidylyltransferase. Residues 236–400 (VTGYGYDVHR…VALVSGWRRP (165 aa)) form a 2-C-methyl-D-erythritol 2,4-cyclodiphosphate synthase region. A divalent metal cation is bound by residues Asp242 and His244. 4-CDP-2-C-methyl-D-erythritol 2-phosphate is bound by residues 242-244 (DVH) and 276-277 (HS). His284 contacts a divalent metal cation. Residues 298-300 (DIG), 303-307 (FPDSN), 374-377 (TTEE), and Phe381 contribute to the 4-CDP-2-C-methyl-D-erythritol 2-phosphate site.

In the N-terminal section; belongs to the IspD/TarI cytidylyltransferase family. IspD subfamily. It in the C-terminal section; belongs to the IspF family. It depends on a divalent metal cation as a cofactor.

The enzyme catalyses 2-C-methyl-D-erythritol 4-phosphate + CTP + H(+) = 4-CDP-2-C-methyl-D-erythritol + diphosphate. The catalysed reaction is 4-CDP-2-C-methyl-D-erythritol 2-phosphate = 2-C-methyl-D-erythritol 2,4-cyclic diphosphate + CMP. The protein operates within isoprenoid biosynthesis; isopentenyl diphosphate biosynthesis via DXP pathway; isopentenyl diphosphate from 1-deoxy-D-xylulose 5-phosphate: step 2/6. Its pathway is isoprenoid biosynthesis; isopentenyl diphosphate biosynthesis via DXP pathway; isopentenyl diphosphate from 1-deoxy-D-xylulose 5-phosphate: step 4/6. Its function is as follows. Bifunctional enzyme that catalyzes the formation of 4-diphosphocytidyl-2-C-methyl-D-erythritol from CTP and 2-C-methyl-D-erythritol 4-phosphate (MEP) (IspD), and catalyzes the conversion of 4-diphosphocytidyl-2-C-methyl-D-erythritol 2-phosphate (CDP-ME2P) to 2-C-methyl-D-erythritol 2,4-cyclodiphosphate (ME-CPP) with a corresponding release of cytidine 5-monophosphate (CMP) (IspF). This is Bifunctional enzyme IspD/IspF from Solidesulfovibrio magneticus (strain ATCC 700980 / DSM 13731 / RS-1) (Desulfovibrio magneticus).